The following is a 197-amino-acid chain: Putative protein N5-glutamine methyltransferase MJ0928 (197 aa).

S-adenosyl-L-methionine is bound by residues 42 to 46 (GVGTG), aspartate 64, and asparagine 105. 105–108 (NPPY) is a binding site for substrate.

The protein belongs to the eukaryotic/archaeal PrmC-related family.

It catalyses the reaction L-glutaminyl-[protein] + S-adenosyl-L-methionine = N(5)-methyl-L-glutaminyl-[protein] + S-adenosyl-L-homocysteine + H(+). In terms of biological role, putative protein methyltransferase using S-adenosyl-L-methionine as the methyl donor. May methylate a Gln residue in target proteins. This Methanocaldococcus jannaschii (strain ATCC 43067 / DSM 2661 / JAL-1 / JCM 10045 / NBRC 100440) (Methanococcus jannaschii) protein is Putative protein N5-glutamine methyltransferase MJ0928.